An 85-amino-acid polypeptide reads, in one-letter code: Cell division topological specificity factor (85 aa).

This sequence belongs to the MinE family.

In terms of biological role, prevents the cell division inhibition by proteins MinC and MinD at internal division sites while permitting inhibition at polar sites. This ensures cell division at the proper site by restricting the formation of a division septum at the midpoint of the long axis of the cell. In Shewanella amazonensis (strain ATCC BAA-1098 / SB2B), this protein is Cell division topological specificity factor.